The sequence spans 614 residues: Chaperone protein HtpG (614 aa).

An a; substrate-binding region spans residues 1 to 324 (MSQIETKEFQ…SEELPLNISR (324 aa)). The segment at 325–537 (ETMQDSALIA…SHYGTHSMQR (213 aa)) is b. A c region spans residues 538 to 614 (MMQLMNRDLQ…LNEILEKALR (77 aa)).

This sequence belongs to the heat shock protein 90 family. Homodimer.

It is found in the cytoplasm. In terms of biological role, molecular chaperone. Has ATPase activity. In Desulfitobacterium hafniense (strain Y51), this protein is Chaperone protein HtpG.